A 92-amino-acid polypeptide reads, in one-letter code: Small ribosomal subunit protein uS19 (92 aa).

Belongs to the universal ribosomal protein uS19 family.

In terms of biological role, protein S19 forms a complex with S13 that binds strongly to the 16S ribosomal RNA. This chain is Small ribosomal subunit protein uS19, found in Trichormus variabilis (strain ATCC 29413 / PCC 7937) (Anabaena variabilis).